The sequence spans 672 residues: Acetyl-coenzyme A synthetase (672 aa).

Residues 217-220 (RRGK) and Thr335 contribute to the CoA site. Residues 411 to 413 (GEP), 435 to 440 (DTWWQT), Asp529, Arg544, and Arg555 contribute to the ATP site. 3 residues coordinate Mg(2+): Val566, His568, and Ile571. Residue Arg613 coordinates CoA. N6-acetyllysine is present on Lys638.

It belongs to the ATP-dependent AMP-binding enzyme family. It depends on Mg(2+) as a cofactor. Acetylated. Deacetylation by the SIR2-homolog deacetylase activates the enzyme. In terms of processing, the N-terminus is blocked.

The catalysed reaction is acetate + ATP + CoA = acetyl-CoA + AMP + diphosphate. Catalyzes the conversion of acetate into acetyl-CoA (AcCoA), an essential intermediate at the junction of anabolic and catabolic pathways. AcsA undergoes a two-step reaction. In the first half reaction, AcsA combines acetate with ATP to form acetyl-adenylate (AcAMP) intermediate. In the second half reaction, it can then transfer the acetyl group from AcAMP to the sulfhydryl group of CoA, forming the product AcCoA. This Methanothrix soehngenii (Methanosaeta concilii) protein is Acetyl-coenzyme A synthetase.